Consider the following 430-residue polypeptide: MDRIRIVGGNALNGIIPISGAKNAALPLMIASLLTSDTLTLENVPHLADVELLLRILGNHGVDIAVNGRRERQSGSYSRTIHFTCRTIVDTNAPYELVSKMRASFWVIGPLLAREGKARVSLPGGCAIGTRPVDLFIDGLRALGATLEIDSGYIEATAPKGGLIGASYTFPKVSVGATHVMLMAASLARGTTVIHNAAREPEVVDLANCLNAMGAKITGQGTATITIEGVTSLSGARHRVLPDRIETGTYAMAVAMTGGDVTLEGTDITLLDTAVEALRRAGAEVSAIEDGIRVIGHGDAIRPVDIVTEPFPGFPTDLQAQFMGLMTRAQGVAHVTETIFENRFMHVQELARLGAKITLSGQTARIEGVQRLRGAPVMATDLRASVSLVIAGLAAEGETLVNRVYHLDRGFERLEEKLTRCGAIVERISD.

22–23 serves as a coordination point for phosphoenolpyruvate; the sequence is KN. Residue Arg-102 coordinates UDP-N-acetyl-alpha-D-glucosamine. Cys-126 (proton donor) is an active-site residue. The residue at position 126 (Cys-126) is a 2-(S-cysteinyl)pyruvic acid O-phosphothioketal. UDP-N-acetyl-alpha-D-glucosamine-binding positions include 131-135, 172-175, Asp-317, and Ile-339; these read RPVDL and KVSV.

It belongs to the EPSP synthase family. MurA subfamily.

Its subcellular location is the cytoplasm. It catalyses the reaction phosphoenolpyruvate + UDP-N-acetyl-alpha-D-glucosamine = UDP-N-acetyl-3-O-(1-carboxyvinyl)-alpha-D-glucosamine + phosphate. It functions in the pathway cell wall biogenesis; peptidoglycan biosynthesis. Its function is as follows. Cell wall formation. Adds enolpyruvyl to UDP-N-acetylglucosamine. This chain is UDP-N-acetylglucosamine 1-carboxyvinyltransferase, found in Allorhizobium ampelinum (strain ATCC BAA-846 / DSM 112012 / S4) (Agrobacterium vitis (strain S4)).